Reading from the N-terminus, the 266-residue chain is 3-methyl-2-oxobutanoate hydroxymethyltransferase 2 (266 aa).

Mg(2+)-binding residues include aspartate 45 and aspartate 84. 3-methyl-2-oxobutanoate contacts are provided by residues 45-46 (DS), aspartate 84, and lysine 112. Glutamate 114 serves as a coordination point for Mg(2+). Residue glutamate 181 is the Proton acceptor of the active site.

This sequence belongs to the PanB family. As to quaternary structure, homodecamer; pentamer of dimers. The cofactor is Mg(2+).

It is found in the cytoplasm. The catalysed reaction is 3-methyl-2-oxobutanoate + (6R)-5,10-methylene-5,6,7,8-tetrahydrofolate + H2O = 2-dehydropantoate + (6S)-5,6,7,8-tetrahydrofolate. The protein operates within cofactor biosynthesis; (R)-pantothenate biosynthesis; (R)-pantoate from 3-methyl-2-oxobutanoate: step 1/2. Catalyzes the reversible reaction in which hydroxymethyl group from 5,10-methylenetetrahydrofolate is transferred onto alpha-ketoisovalerate to form ketopantoate. This is 3-methyl-2-oxobutanoate hydroxymethyltransferase 2 from Pseudomonas fluorescens (strain ATCC BAA-477 / NRRL B-23932 / Pf-5).